The chain runs to 910 residues: Inactive disease susceptibility protein LOV1 (910 aa).

Residues Ala22–Asn60 adopt a coiled-coil conformation. In terms of domain architecture, NB-ARC spans Glu169 to Asp461. LRR repeat units follow at residues Leu584–Leu609, Ile610–Leu632, and Leu634–Met655.

It belongs to the disease resistance NB-LRR family. RPP8/HRT subfamily.

This Arabidopsis thaliana (Mouse-ear cress) protein is Inactive disease susceptibility protein LOV1 (LOV1).